The primary structure comprises 858 residues: Ubiquitin carboxyl-terminal hydrolase 5 (858 aa).

Ala2 is modified (N-acetylalanine). Positions 74 to 96 are disordered; that stretch reads RRTRRPKEEDPATGTGDPPRKKP. Residue Lys113 forms a Glycyl lysine isopeptide (Lys-Gly) (interchain with G-Cter in SUMO) linkage. 2 positions are modified to phosphoserine: Ser149 and Ser156. The UBP-type; degenerate zinc-finger motif lies at 175–283; sequence QVSKHAFSLK…EHLSHFGIDM (109 aa). Cys195 and Cys816 form a disulfide bridge. 2 residues coordinate Zn(2+): Cys199 and Cys202. Trp209 provides a ligand contact to substrate. Residue Cys219 participates in Zn(2+) binding. Residue 221–224 participates in substrate binding; sequence RRYF. Residue His232 coordinates Zn(2+). 3 residues coordinate substrate: Tyr259, Tyr261, and Asp264. Position 292 is a phosphothreonine (Thr292). In terms of domain architecture, USP spans 326-856; that stretch reads TGIRNLGNSC…LGYIYFYQRV (531 aa). Cys335 acts as the Nucleophile in catalysis. Thr623 carries the post-translational modification Phosphothreonine. 2 UBA domains span residues 654–695 and 722–762; these read MLDE…VMSH and PPPE…IFSH. 3 positions are modified to phosphoserine: Ser779, Ser783, and Ser785. Catalysis depends on His818, which acts as the Proton acceptor.

Belongs to the peptidase C19 family. As to quaternary structure, homodimer. Interacts with TRIML1. In terms of processing, ubiquitinated by SMURF1; leading to proteasomal degradation. SUMOylated at Lys-113; SUMOylation affects the interaction with Cav3.2 channels.

Its subcellular location is the cytoplasm. It localises to the stress granule. The protein localises to the nucleus. It carries out the reaction Thiol-dependent hydrolysis of ester, thioester, amide, peptide and isopeptide bonds formed by the C-terminal Gly of ubiquitin (a 76-residue protein attached to proteins as an intracellular targeting signal).. Functionally, deubiquitinating enzyme that participates in a wide range of cellular processes by specifically cleaving isopeptide bonds between ubiquitin and substrate proteins or ubiquitin itself. Affects thereby important cellular signaling pathways such as NF-kappa-B, Wnt/beta-catenin, and cytokine production by regulating ubiquitin-dependent protein degradation. Participates in the activation of the Wnt signaling pathway by promoting FOXM1 deubiquitination and stabilization that induces the recruitment of beta-catenin to Wnt target gene promoter. Regulates the assembly and disassembly of heat-induced stress granules by mediating the hydrolysis of unanchored ubiquitin chains. Promotes lipopolysaccharide-induced apoptosis and inflammatory response by stabilizing the TXNIP protein. Affects T-cell biology by stabilizing the inhibitory receptor on T-cells PDC1. Acts as a negative regulator of autophagy by regulating ULK1 at both protein and mRNA levels. Acts also as a negative regulator of type I interferon production by simultaneously removing both 'Lys-48'-linked unanchored and 'Lys-63'-linked anchored polyubiquitin chains on the transcription factor IRF3. Modulates the stability of DNA mismatch repair protein MLH1 and counteracts the effect of the ubiquitin ligase UBR4. Upon activation by insulin, it gets phosphorylated through mTORC1-mediated phosphorylation to enhance YTHDF1 stability by removing 'Lys-11'-linked polyubiquitination. May also deubiquitinate other substrates such as the calcium channel CACNA1H. The polypeptide is Ubiquitin carboxyl-terminal hydrolase 5 (USP5) (Homo sapiens (Human)).